Reading from the N-terminus, the 202-residue chain is ATP-dependent Clp protease proteolytic subunit (202 aa).

Ser106 functions as the Nucleophile in the catalytic mechanism. Residue His131 is part of the active site.

This sequence belongs to the peptidase S14 family. In terms of assembly, fourteen ClpP subunits assemble into 2 heptameric rings which stack back to back to give a disk-like structure with a central cavity, resembling the structure of eukaryotic proteasomes.

The protein localises to the cytoplasm. It catalyses the reaction Hydrolysis of proteins to small peptides in the presence of ATP and magnesium. alpha-casein is the usual test substrate. In the absence of ATP, only oligopeptides shorter than five residues are hydrolyzed (such as succinyl-Leu-Tyr-|-NHMec, and Leu-Tyr-Leu-|-Tyr-Trp, in which cleavage of the -Tyr-|-Leu- and -Tyr-|-Trp bonds also occurs).. Cleaves peptides in various proteins in a process that requires ATP hydrolysis. Has a chymotrypsin-like activity. Plays a major role in the degradation of misfolded proteins. In Shewanella baltica (strain OS223), this protein is ATP-dependent Clp protease proteolytic subunit.